Here is a 78-residue protein sequence, read N- to C-terminus: Large ribosomal subunit protein bL28 (78 aa).

Positions 1–21 (MARVCQVTGKGPMTGNNVSHA) are disordered.

Belongs to the bacterial ribosomal protein bL28 family.

This is Large ribosomal subunit protein bL28 from Bordetella petrii (strain ATCC BAA-461 / DSM 12804 / CCUG 43448).